Reading from the N-terminus, the 418-residue chain is Putative FBD-associated F-box protein At5g56560 (418 aa).

One can recognise an F-box domain in the interval 4-60 (QTRLSDLPDELLLKILSALPMFKVTLATRLISRRWKGPWKLVPDVTFDDDDIPFKSF). The region spanning 340–390 (LWEEPAVVAKCLSEHLEIFEWRQYEGTEQERNVAGYILANATCLKMATFST) is the FBD domain.

The polypeptide is Putative FBD-associated F-box protein At5g56560 (Arabidopsis thaliana (Mouse-ear cress)).